Here is a 1392-residue protein sequence, read N- to C-terminus: DNA-directed RNA polymerase subunit beta'' (1392 aa).

Positions 224, 295, 302, and 305 each coordinate Zn(2+).

Belongs to the RNA polymerase beta' chain family. RpoC2 subfamily. In plastids the minimal PEP RNA polymerase catalytic core is composed of four subunits: alpha, beta, beta', and beta''. When a (nuclear-encoded) sigma factor is associated with the core the holoenzyme is formed, which can initiate transcription. It depends on Zn(2+) as a cofactor.

Its subcellular location is the plastid. It is found in the chloroplast. It carries out the reaction RNA(n) + a ribonucleoside 5'-triphosphate = RNA(n+1) + diphosphate. In terms of biological role, DNA-dependent RNA polymerase catalyzes the transcription of DNA into RNA using the four ribonucleoside triphosphates as substrates. The sequence is that of DNA-directed RNA polymerase subunit beta'' from Nicotiana tomentosiformis (Tobacco).